A 718-amino-acid chain; its full sequence is Phenylalanine--tRNA ligase beta subunit (718 aa).

One can recognise a tRNA-binding domain in the interval 39–153 (LNEISGIKFG…IFDLESNPLK (115 aa)). The B5 domain occupies 386 to 460 (SKKTFLDLNY…RFYGLEKLKD (75 aa)). The Mg(2+) site is built by Asp438, Asp444, and Asp448.

It belongs to the phenylalanyl-tRNA synthetase beta subunit family. Type 1 subfamily. As to quaternary structure, tetramer of two alpha and two beta subunits. Mg(2+) is required as a cofactor.

It is found in the cytoplasm. It carries out the reaction tRNA(Phe) + L-phenylalanine + ATP = L-phenylalanyl-tRNA(Phe) + AMP + diphosphate + H(+). The protein is Phenylalanine--tRNA ligase beta subunit of Mesomycoplasma hyopneumoniae (strain 232) (Mycoplasma hyopneumoniae).